The sequence spans 226 residues: MVAPLAVDIDGTLTRPDKSIDPRVFDAIRAWDDHVVIATGKSFPYPVGLCEFLGMPLNVIAENGGAVYVEPAGEVVYNGDPEGAAAVAEEYVAAGYDLGWGAVDMVNRWRETELAVDRDQPLEPLVAIADDHGMDVVDTGYAYHVKDAGVDKATGLETVAELLGVVPSSFIAIGDSENDAELLELAGTGFAVANADAHARGAADAVTDASFADGFLEALDRARDNR.

Residue Asp8 is the Nucleophile of the active site. Positions 8 and 10 each coordinate Mg(2+). Lys152 provides a ligand contact to substrate. Mg(2+)-binding residues include Asp175 and Asp179.

This sequence belongs to the archaeal SPP-like hydrolase family. Mg(2+) serves as cofactor.

It catalyses the reaction 2-phosphoglycolate + H2O = glycolate + phosphate. In terms of biological role, catalyzes the dephosphorylation of 2-phosphoglycolate. This chain is Phosphoglycolate phosphatase, found in Natronomonas pharaonis (strain ATCC 35678 / DSM 2160 / CIP 103997 / JCM 8858 / NBRC 14720 / NCIMB 2260 / Gabara) (Halobacterium pharaonis).